Consider the following 579-residue polypeptide: Capsid vertex component 2 (579 aa).

Residues 1-50 (MTARYGFGSISFPNKCGIFLSTTKNFIAPNFPIHYWTAPAFELRGRMNPD) are interaction with major capsid protein/MCP.

This sequence belongs to the herpesviridae CVC2 protein family. In terms of assembly, heterodimerizes with CVC1. Interacts with major capsid protein/MCP and triplex capsid protein 1/TRX1 at the pentamer vertices. Interacts with the large tegument protein/LTP.

It is found in the virion. It localises to the host nucleus. Its function is as follows. Capsid vertex-specific component that plays a role during viral DNA encapsidation, assuring correct genome cleavage and presumably stabilizing capsids that contain full-length viral genomes. Participates in the interaction between the capsid and the tegument through interaction with the large tegument protein/LTP. The protein is Capsid vertex component 2 of Homo sapiens (Human).